Here is a 268-residue protein sequence, read N- to C-terminus: Embryonic abundant protein USP87 (268 aa).

An N-terminal signal peptide occupies residues 1–22 (MEFAHLTVLSLFCLAFVGITAT). 5 repeat units span residues 50-55 (GKTNSL), 83-88 (GNTNSV), 101-106 (GVTDSI), 166-183 (YVVE…MCHR), and 202-222 (YVVS…VCHH). The segment at 50-106 (GKTNSLPIKSEELKQYSTLFFEHDLHPRKNFILGNTNSVGSIIRPFTKSRQGVTDSI) is 3 X 6 AA approximate repeats. The region spanning 68 to 259 (LFFEHDLHPR…GNKAAAWVPN (192 aa)) is the BURP domain. Residues 166–222 (YVVEDVKKVGDNAVMCHRLNFEKVVFNCHQVRDTTAYVVSLVASDGTKTKALTVCHH) are 2 X approximate repeats. An N-linked (GlcNAc...) asparagine glycan is attached at Asn-259.

In terms of tissue distribution, seed.

The polypeptide is Embryonic abundant protein USP87 (Vicia faba (Broad bean)).